The primary structure comprises 662 residues: Protein Aster-C (662 aa).

Positions 1–34 are disordered; sequence MEGAPTVRQVMNEGDSSLATDLQEDVEENPSPTV. The 68-residue stretch at 69–136 folds into the GRAM domain; the sequence is EEYRRQFTHL…KNITFMTKEK (68 aa). Disordered regions lie at residues 212–237 and 249–284; these read SIEDVQPRSPGRSSLDDSGERDEKLS and RVSETESFDGNSSKGGLGKEESQNEKQTKKSLLPTL. Positions 265 to 276 are enriched in basic and acidic residues; sequence LGKEESQNEKQT. Residues 326-497 enclose the VASt domain; sequence HGRLFINRIF…DLLIEESVLN (172 aa). Residues 557 to 577 traverse the membrane as a helical segment; the sequence is LIVVMSIFVLLLVLLNVTLFL.

It localises to the endoplasmic reticulum membrane. The protein localises to the cell membrane. Cholesterol transporter that mediates non-vesicular transport of cholesterol from the plasma membrane (PM) to the endoplasmic reticulum (ER). Contains unique domains for binding cholesterol and the PM, thereby serving as a molecular bridge for the transfer of cholesterol from the PM to the ER. Plays a crucial role in cholesterol homeostasis and has the unique ability to localize to the PM based on the level of membrane cholesterol. In lipid-poor conditions localizes to the ER membrane and in response to excess cholesterol in the PM is recruited to the endoplasmic reticulum-plasma membrane contact sites (EPCS) which is mediated by the GRAM domain. At the EPCS, the sterol-binding VASt/ASTER domain binds to the cholesterol in the PM and facilitates its transfer from the PM to ER. This Homo sapiens (Human) protein is Protein Aster-C (GRAMD1C).